An 896-amino-acid chain; its full sequence is Androgen receptor (896 aa).

Residues 1 to 534 (MEVQLGLGRV…PIDYYFPPQK (534 aa)) are modulating. An interaction with ZNF318 region spans residues 1–563 (MEVQLGLGRV…GSCKVFFKRA (563 aa)). Disordered regions lie at residues 35–152 (QNPG…LSLL) and 178–218 (LLQQ…YLGG). A compositionally biased stretch (low complexity) spans 54–78 (LQQQQLQQQETSPRRQQQQQQQPSE). Residue Ser-65 is modified to Phosphoserine; by CDK9. Residue Ser-81 is modified to Phosphoserine. The segment covering 178–189 (LLQQQQQQQQQQ) has biased composition (low complexity). Positions 190-199 (EAVSEGNSSG) are enriched in polar residues. Tyr-215 is modified (phosphotyrosine; by CSK). Ser-248 is modified (phosphoserine). Residue Tyr-259 is modified to Phosphotyrosine; by CSK and TNK2. 4 positions are modified to phosphotyrosine; by CSK: Tyr-299, Tyr-338, Tyr-349, and Tyr-354. Position 355 is a phosphotyrosine; by CSK and TNK2 (Tyr-355). Lys-378 is covalently cross-linked (Glycyl lysine isopeptide (Lys-Gly) (interchain with G-Cter in SUMO)). Tyr-385 carries the post-translational modification Phosphotyrosine; by CSK. Lys-497 participates in a covalent cross-link: Glycyl lysine isopeptide (Lys-Gly) (interchain with G-Cter in SUMO). Phosphotyrosine; by CSK occurs at positions 511 and 528. Residues 528 to 895 (YYFPPQKTCL…GKVKPIYFHT (368 aa)) are interaction with LPXN. The segment at residues 535 to 608 (TCLICGDEAS…AGMTLGARKL (74 aa)) is a DNA-binding region (nuclear receptor). 2 NR C4-type zinc fingers span residues 536-556 (CLIC…CGSC) and 572-596 (CASR…LRKC). An interaction with HIPK3 region spans residues 548–638 (YGALTCGSCK…TEEPAQKLTV (91 aa)). The interval 568–895 (QKYLCASRND…GKVKPIYFHT (328 aa)) is interaction with CCAR1. Residues 601 to 895 (MTLGARKLKK…GKVKPIYFHT (295 aa)) are interaction with KAT7. Ser-627 is modified (phosphoserine; by STK4/MST1). An NR LBD domain is found at 645–876 (ECQPIFLNVL…DFPEMMAEII (232 aa)). 17beta-hydroxy-5alpha-androstan-3-one contacts are provided by Asn-682 and Arg-729. Residues Lys-822 and Lys-824 each participate in a glycyl lysine isopeptide (Lys-Gly) (interchain with G-Cter in ubiquitin) cross-link. 17beta-hydroxy-5alpha-androstan-3-one is bound at residue Thr-854. The residue at position 892 (Tyr-892) is a Phosphotyrosine; by CSK.

Belongs to the nuclear hormone receptor family. NR3 subfamily. As to quaternary structure, binds DNA as a homodimer. Part of a ternary complex containing AR, EFCAB6/DJBP and PARK7. Interacts with HIPK3 and NR0B2 in the presence of androgen. The ligand binding domain interacts with KAT7/HBO1 in the presence of dihydrotestosterone. Interacts with EFCAB6/DJBP, PQBP1, RANBP9, RBAK, SPDEF, SRA1, TGFB1I1 and RREB1. Interacts with ZMIZ1/ZIMP10 and ZMIZ2/ZMIP7 which both enhance its transactivation activity. Interacts with SLC30A9 and RAD54L2/ARIP4. Interacts with MACROD1 (via macro domain). Interacts via the ligand-binding domain with LXXLL and FXXLF motifs from NCOA1, NCOA2, NCOA3 and MAGEA11. Interacts (via nuclear receptor DNA binding domain and nuclear receptor ligand binding domain) with NCOA4. The AR N-terminal poly-Gln region binds Ran resulting in enhancement of AR-mediated transactivation. Ran-binding decreases as the poly-Gln length increases. Interacts with HIP1 (via coiled coil domain). Interacts (via ligand-binding domain) with TRIM68. Interacts with TNK2. Interacts with USP26. Interacts with RNF6. Interacts (regulated by RNF6 probably through polyubiquitination) with RNF14; regulates AR transcriptional activity. Interacts with PRMT2 and TRIM24. Interacts with RACK1. Interacts with RANBP10; this interaction enhances dihydrotestosterone-induced AR transcriptional activity. Interacts with PRPF6 in a hormone-independent way; this interaction enhances dihydrotestosterone-induced AR transcriptional activity. Interacts with STK4/MST1. Interacts with ZIPK/DAPK3. Interacts with LPXN. Interacts with MAK. Part of a complex containing AR, MAK and NCOA3. Interacts with CRY1. Interacts with CCAR1 and GATA2. Interacts with ZNF318. Interacts with BUD31. Interacts with ARID4A. Interacts with ARID4B. Interacts (via NR LBD domain) with ZBTB7A; the interaction is direct and androgen-dependent. Interacts with NCOR1. Interacts with NCOR2. Interacts with CRY2 in a ligand-dependent manner. Post-translationally, phosphorylated in prostate cancer cells in response to several growth factors including EGF. Phosphorylation is induced by c-Src kinase (CSK). Tyr-511 is one of the major phosphorylation sites and an increase in phosphorylation and Src kinase activity is associated with prostate cancer progression. Phosphorylation by TNK2 enhances the DNA-binding and transcriptional activity. Phosphorylation at Ser-65 by CDK9 regulates AR promoter selectivity and cell growth. Sumoylated on Lys-378 (major) and Lys-497. Ubiquitinated. Deubiquitinated by USP26. 'Lys-6' and 'Lys-27'-linked polyubiquitination by RNF6 modulates AR transcriptional activity and specificity. In terms of processing, palmitoylated by ZDHHC7 and ZDHHC21. Palmitoylation is required for plasma membrane targeting and for rapid intracellular signaling via ERK and AKT kinases and cAMP generation.

The protein resides in the nucleus. Its subcellular location is the cytoplasm. Steroid hormone receptors are ligand-activated transcription factors that regulate eukaryotic gene expression and affect cellular proliferation and differentiation in target tissues. Transcription factor activity is modulated by bound coactivator and corepressor proteins like ZBTB7A that recruits NCOR1 and NCOR2 to the androgen response elements/ARE on target genes, negatively regulating androgen receptor signaling and androgen-induced cell proliferation. Transcription activation is also down-regulated by NR0B2. Activated, but not phosphorylated, by HIPK3 and ZIPK/DAPK3. The protein is Androgen receptor (AR) of Sus scrofa (Pig).